A 516-amino-acid chain; its full sequence is Facilitated glucose transporter homolog (516 aa).

The tract at residues 1–37 (MNAVVASQNKNDRSFSNMESESSSNVEKSEKENHHQS) is disordered. The Cytoplasmic portion of the chain corresponds to 1–47 (MNAVVASQNKNDRSFSNMESESSSNVEKSEKENHHQSLPDENWTPFL). Positions 14 to 26 (SFSNMESESSSNV) are enriched in low complexity. A compositionally biased stretch (basic and acidic residues) spans 27–37 (EKSEKENHHQS). A helical membrane pass occupies residues 48–68 (FFCISSIALASFQDGFQIGCI). Topologically, residues 69–101 (NAPGPLIIDWIKKCHFELFGEVLSQYQADFIWS) are extracellular. A helical transmembrane segment spans residues 102-122 (VAVSMFSVGGMFGSFCSGFLA). Residues 123–138 (DKFGRKSTLLYNNILA) are Cytoplasmic-facing. Residues 139–159 (LLAAVCLSTSKLFNFYPMIVF) traverse the membrane as a helical segment. At 160–161 (GR) the chain is on the extracellular side. A helical membrane pass occupies residues 162–182 (FLVGLNCGITSGLVPMFLTEL). The Cytoplasmic portion of the chain corresponds to 183-200 (APANLRGKCGSFHQLNIS). A helical transmembrane segment spans residues 201–221 (VAIVLSQALGLPQIFGTQVGW). Position 222 (Pro-222) is a topological domain, extracellular. Residues 223-243 (YIFACVAIPTFLQLATIPFCV) form a helical membrane-spanning segment. Residues 244 to 306 (ESPKYLISKL…SLFKGDNQWP (63 aa)) are Cytoplasmic-facing. Residues 307–327 (MIVSILMMFSQQFSGISAVTF) form a helical membrane-spanning segment. The Extracellular segment spans residues 328–344 (YSTLIFKRNGLSGNEPM). The chain crosses the membrane as a helical span at residues 345–365 (YATVGFGCIKLIATFGCLFLI). At 366 to 376 (DHPKFGRKRLH) the chain is on the cytoplasmic side. Residues 377–397 (IAGLSGMCISSILIVITLTLS) traverse the membrane as a helical segment. Residues 398 to 409 (NAGYHWASYMNV) are Extracellular-facing. A helical membrane pass occupies residues 410 to 430 (LFILSFVVTFAFGPGPIPWFF). Over 431 to 444 (TSELFDSATRGRAA) the chain is Cytoplasmic. The chain crosses the membrane as a helical span at residues 445–465 (AVSATSNWVANWMVGLTFLPI). Residues 466–471 (NNIIHQ) lie on the Extracellular side of the membrane. Residues 472–492 (YAFLMFTFFTFTFAIFTWKFV) traverse the membrane as a helical segment. Residues 493-516 (PETKGKSPSAIRKELAFMRKRICS) are Cytoplasmic-facing.

Belongs to the major facilitator superfamily. Sugar transporter (TC 2.A.1.1) family. As to expression, expressed in seam cells from the early embryonic stage through the L2 stage (at protein level).

The protein resides in the cell membrane. In terms of biological role, appears to have no transport activity for glucose. This is Facilitated glucose transporter homolog from Caenorhabditis elegans.